A 526-amino-acid chain; its full sequence is NAD(P)H-quinone oxidoreductase chain 4 1 (526 aa).

14 consecutive transmembrane segments (helical) span residues 7–27 (FPWLSALVLLPLLAAFGIPLL), 35–55 (WYALAVGALDLGLMAYIFGWH), 86–106 (LSFPLVLLSGLITTLAIVAAW), 114–134 (LFFFLLLLMYGAQVGVFLAQD), 135–155 (LLLFFLMWEIELVPVYLLIAI), 168–188 (FILYTAAASIFILVGSLAMAF), 208–228 (ALQILAYAAFLIAFGVKLPVF), 242–262 (SAPISMILAGVLLKMGGYGLI), 276–296 (FAPVLAVLGAVNIVYGALAAL), 310–330 (IAHMGFVLIGIAAFTELGLNG), 331–351 (ALLQMISHGLIAAVLFFLTGI), 374–396 (AFALFTAGSLASLALPGMSGFVG), 417–437 (GIALLAAVGIILTPIYLLSML), and 463–483 (MAVALCLLLPILGIGLYPRLA).

The protein belongs to the complex I subunit 4 family.

It is found in the cellular thylakoid membrane. It catalyses the reaction a plastoquinone + NADH + (n+1) H(+)(in) = a plastoquinol + NAD(+) + n H(+)(out). The catalysed reaction is a plastoquinone + NADPH + (n+1) H(+)(in) = a plastoquinol + NADP(+) + n H(+)(out). Its function is as follows. NDH-1 shuttles electrons from NAD(P)H, via FMN and iron-sulfur (Fe-S) centers, to quinones in the respiratory chain. The immediate electron acceptor for the enzyme in this species is believed to be plastoquinone. Couples the redox reaction to proton translocation (for every two electrons transferred, four hydrogen ions are translocated across the cytoplasmic membrane), and thus conserves the redox energy in a proton gradient. The sequence is that of NAD(P)H-quinone oxidoreductase chain 4 1 from Synechococcus sp. (strain JA-3-3Ab) (Cyanobacteria bacterium Yellowstone A-Prime).